The chain runs to 189 residues: GTP cyclohydrolase 1 (189 aa).

Zn(2+) contacts are provided by C78, H81, and C150.

It belongs to the GTP cyclohydrolase I family. In terms of assembly, homomer.

The enzyme catalyses GTP + H2O = 7,8-dihydroneopterin 3'-triphosphate + formate + H(+). It functions in the pathway cofactor biosynthesis; 7,8-dihydroneopterin triphosphate biosynthesis; 7,8-dihydroneopterin triphosphate from GTP: step 1/1. In Listeria monocytogenes serotype 4b (strain CLIP80459), this protein is GTP cyclohydrolase 1.